The following is a 223-amino-acid chain: Large ribosomal subunit protein uL3 (223 aa).

Belongs to the universal ribosomal protein uL3 family. In terms of assembly, part of the 50S ribosomal subunit. Forms a cluster with proteins L14 and L19.

Its function is as follows. One of the primary rRNA binding proteins, it binds directly near the 3'-end of the 23S rRNA, where it nucleates assembly of the 50S subunit. This Cutibacterium acnes (strain DSM 16379 / KPA171202) (Propionibacterium acnes) protein is Large ribosomal subunit protein uL3.